We begin with the raw amino-acid sequence, 206 residues long: Phosphoheptose isomerase (206 aa).

One can recognise an SIS domain in the interval Leu37–Glu195. Asn52–Gly54 contributes to the substrate binding site. 2 residues coordinate Zn(2+): His61 and Glu65. Substrate is bound by residues Glu65, Asn93–Asp94, Ser119–Ser121, Ser124, and Gln172. Zn(2+)-binding residues include Gln172 and His180.

It belongs to the SIS family. GmhA subfamily. As to quaternary structure, homotetramer. The cofactor is Zn(2+).

It is found in the cytoplasm. The catalysed reaction is 2 D-sedoheptulose 7-phosphate = D-glycero-alpha-D-manno-heptose 7-phosphate + D-glycero-beta-D-manno-heptose 7-phosphate. Its pathway is carbohydrate biosynthesis; D-glycero-D-manno-heptose 7-phosphate biosynthesis; D-glycero-alpha-D-manno-heptose 7-phosphate and D-glycero-beta-D-manno-heptose 7-phosphate from sedoheptulose 7-phosphate: step 1/1. Functionally, catalyzes the isomerization of sedoheptulose 7-phosphate in D-glycero-D-manno-heptose 7-phosphate. The polypeptide is Phosphoheptose isomerase (Hamiltonella defensa subsp. Acyrthosiphon pisum (strain 5AT)).